The chain runs to 65 residues: MKVKMKTRSGAAKRFKKTANGFKRKQAFKSHILTKKSAKRIRQLRGLKMVDKSDEAAVRRMCPYI.

The protein belongs to the bacterial ribosomal protein bL35 family.

This is Large ribosomal subunit protein bL35 from Psychrobacter arcticus (strain DSM 17307 / VKM B-2377 / 273-4).